Here is a 419-residue protein sequence, read N- to C-terminus: Zinc finger CCCH domain-containing protein 62 (419 aa).

The segment at 89 to 116 adopts a C3H1-type zinc-finger fold; it reads SLRKWVCKYWKDGKCKRGEQCQFLHSWS. WD repeat units follow at residues 129–168, 210–247, 256–293, 296–335, and 383–419; these read GHNK…CVHS, GVVG…ESDP, GHSG…CIMT, QHTG…KVVQ, and FSTH…GNKV.

The chain is Zinc finger CCCH domain-containing protein 62 (ZFWD4) from Arabidopsis thaliana (Mouse-ear cress).